We begin with the raw amino-acid sequence, 796 residues long: Probable phosphoketolase 2 (796 aa).

The protein belongs to the XFP family. It depends on thiamine diphosphate as a cofactor.

The protein is Probable phosphoketolase 2 of Lactiplantibacillus plantarum (strain ATCC BAA-793 / NCIMB 8826 / WCFS1) (Lactobacillus plantarum).